The primary structure comprises 348 residues: Phosphoribosylformylglycinamidine cyclo-ligase (348 aa).

The protein belongs to the AIR synthase family.

It localises to the cytoplasm. The catalysed reaction is 2-formamido-N(1)-(5-O-phospho-beta-D-ribosyl)acetamidine + ATP = 5-amino-1-(5-phospho-beta-D-ribosyl)imidazole + ADP + phosphate + H(+). It functions in the pathway purine metabolism; IMP biosynthesis via de novo pathway; 5-amino-1-(5-phospho-D-ribosyl)imidazole from N(2)-formyl-N(1)-(5-phospho-D-ribosyl)glycinamide: step 2/2. This chain is Phosphoribosylformylglycinamidine cyclo-ligase, found in Cereibacter sphaeroides (strain ATCC 17023 / DSM 158 / JCM 6121 / CCUG 31486 / LMG 2827 / NBRC 12203 / NCIMB 8253 / ATH 2.4.1.) (Rhodobacter sphaeroides).